A 285-amino-acid polypeptide reads, in one-letter code: Putative sugar uptake protein lp_2503 (285 aa).

The next 9 helical transmembrane spans lie at 2–21 (GILIALIPAIAWGSIGLISG), 31–48 (TLGMTMGALVFGLALWAV), 55–72 (SKIWLIGIVSGLFWSIGQ), 112–134 (GNMYWIGSASVIVLIAGAVLTSL), 147–169 (NWGVGIRALILSTIGYAGYTIVV), 179–196 (VVMPQAVGMLLGALIWSF), 209–228 (NIVTGLVWGIGNLFMFMAMA), 233–255 (AVAYSLSQMGIVISTFGSIYLLG), and 264–283 (VYVVIGSILVIVGGVALSLM).

Belongs to the GRP transporter (TC 2.A.7.5) family.

The protein localises to the cell membrane. The chain is Putative sugar uptake protein lp_2503 from Lactiplantibacillus plantarum (strain ATCC BAA-793 / NCIMB 8826 / WCFS1) (Lactobacillus plantarum).